The primary structure comprises 1495 residues: Nuclear pore complex protein NUP160 (1495 aa).

Part of the nuclear pore complex (NPC). The NPC has an eight-fold symmetrical structure comprising a central transport channel and two rings, the cytoplasmic and nuclear rings, to which eight filaments are attached. The cytoplasmic filaments have loose ends, while the nuclear filaments are joined in a distal ring, forming a nuclear basket. NPCs are highly dynamic in configuration and composition, and can be devided in 3 subcomplexes, the NUP62 subcomplex, the NUP107-160 subcomplex and the NUP93 subcomplex, containing approximately 30 different nucleoporin proteins. In terms of tissue distribution, expressed in roots, stems, anthers, siliques and vascular tissues of cotyledons, leaves and hypocotyls.

The protein localises to the nucleus membrane. The protein resides in the nucleus. It localises to the nuclear pore complex. Contributes to the transfer of mature mRNA from the nucleus to the cytosol. Required for both R gene-mediated and basal disease resistance. RNA export seems to play a critical role in stress responses and regulation of plant growth and development. Required for proper expression of factors associated with auxin signaling. This chain is Nuclear pore complex protein NUP160, found in Arabidopsis thaliana (Mouse-ear cress).